The following is a 230-amino-acid chain: Ureidoacrylate amidohydrolase RutB (230 aa).

Asp24 serves as the catalytic Proton acceptor. Residue Lys133 is part of the active site. Residue Cys166 is the Nucleophile of the active site.

It belongs to the isochorismatase family. RutB subfamily.

The enzyme catalyses (Z)-3-ureidoacrylate + H2O + H(+) = (Z)-3-aminoacrylate + NH4(+) + CO2. It catalyses the reaction (Z)-3-ureidoacrylate + H2O = (Z)-3-aminoacrylate + carbamate + H(+). The catalysed reaction is (Z)-2-methylureidoacrylate + H2O + H(+) = (Z)-2-methylaminoacrylate + NH4(+) + CO2. In terms of biological role, hydrolyzes ureidoacrylate to form aminoacrylate and carbamate. The carbamate hydrolyzes spontaneously, thereby releasing one of the nitrogen atoms of the pyrimidine ring as ammonia and one of its carbon atoms as CO2. This Escherichia coli O81 (strain ED1a) protein is Ureidoacrylate amidohydrolase RutB.